Reading from the N-terminus, the 566-residue chain is Bicarbonate transporter BicA (566 aa).

The Cytoplasmic segment spans residues 1–15 (MQITNKIHFRNIRGD). Residues 16–36 (IFGGLTAAVIALPMALAFGVA) form a helical membrane-spanning segment. Residues 37–42 (SGAGAE) are Periplasmic-facing. Residues 43-63 (AGLWGAVLVGFFAALFGGTPT) traverse the membrane as a helical segment. A topological domain (cytoplasmic) is located at residue leucine 64. The chain crosses the membrane as a helical span at residues 65–85 (ISEPTGPMTVVMTAVIAHFTA). Threonine 69 serves as a coordination point for hydrogencarbonate. Residues 86 to 93 (SAATPEEG) lie on the Periplasmic side of the membrane. A helical transmembrane segment spans residues 94-114 (LAIAFTVVMMAGVFQIIFGSL). Residues 115-126 (KLGKYVTMMPYT) lie on the Cytoplasmic side of the membrane. The helical transmembrane segment at 127-147 (VISGFMSGIGIILVILQLAPF) threads the bilayer. The Periplasmic segment spans residues 148–169 (LGQASPGGGVIGTLQNLPTLLS). A helical transmembrane segment spans residues 170 to 190 (NIQPGETALALGTVAIIWFMP). Over 191–196 (EKFKKV) the chain is Cytoplasmic. A helical transmembrane segment spans residues 197–217 (IPPQLVALVLGTVIAFFVFPP). Topologically, residues 218–247 (EVSDLRRIGEIRAGFPELVRPSFSPVEFQR) are periplasmic. The chain crosses the membrane as a helical span at residues 248–268 (MILDAAVLGMLGCIDALLTSV). Na(+)-binding residues include aspartate 262, threonine 266, and glycine 304. The Cytoplasmic portion of the chain corresponds to 269 to 318 (VADSLTRTEHNSNKELIGQGLGNLFSGLFGGIAGAGATMGTVVNIQSGGR). Alanine 305 provides a ligand contact to hydrogencarbonate. Residue threonine 306 coordinates Na(+). The helical transmembrane segment at 319–339 (TALSGLVRAFVLLVVILGAAS) threads the bilayer. A topological domain (periplasmic) is located at residue leucine 340. Residues 341–361 (TATIPLAVLAGIAFKVGVDII) form a helical membrane-spanning segment. Residues 362-371 (DWSFLKRAHE) are Cytoplasmic-facing. A helical membrane pass occupies residues 372–392 (ISPKGALIMYGVILLTVLVDL). Isoleucine 393 is a topological domain (periplasmic). Residues 394 to 414 (VAVGVGVFVANVLTIERMSNL) traverse the membrane as a helical segment. Residues 415–566 (QSEKVQTVSD…GVTAPSSEMG (152 aa)) lie on the Cytoplasmic side of the membrane. Residues 436–546 (KRWLDEGQGR…MSREEALKNA (111 aa)) enclose the STAS domain.

It belongs to the SLC26A/SulP transporter (TC 2.A.53) family.

It is found in the cell inner membrane. In terms of biological role, low/medium affinity, Na(+)-dependent bicarbonate transporter. This Picosynechococcus sp. (strain ATCC 27264 / PCC 7002 / PR-6) (Agmenellum quadruplicatum) protein is Bicarbonate transporter BicA (bicA).